The sequence spans 514 residues: 2,3-bisphosphoglycerate-independent phosphoglycerate mutase (514 aa).

Residues Asp-13 and Ser-63 each contribute to the Mn(2+) site. Residue Ser-63 is the Phosphoserine intermediate of the active site. Residues His-124, 154 to 155, Arg-186, Arg-192, 258 to 261, and Lys-332 contribute to the substrate site; these read RD and RADR. Residues Asp-399, His-403, Asp-440, His-441, and His-459 each coordinate Mn(2+).

It belongs to the BPG-independent phosphoglycerate mutase family. In terms of assembly, monomer. Mn(2+) is required as a cofactor.

It carries out the reaction (2R)-2-phosphoglycerate = (2R)-3-phosphoglycerate. It participates in carbohydrate degradation; glycolysis; pyruvate from D-glyceraldehyde 3-phosphate: step 3/5. Functionally, catalyzes the interconversion of 2-phosphoglycerate and 3-phosphoglycerate. This chain is 2,3-bisphosphoglycerate-independent phosphoglycerate mutase, found in Legionella pneumophila (strain Corby).